Consider the following 23-residue polypeptide: RLKVIPEKLKDVKLVCTDVFGDN.

The protein belongs to the PNP/UDP phosphorylase family. In terms of assembly, homotetramer.

It carries out the reaction uridine + phosphate = alpha-D-ribose 1-phosphate + uracil. It functions in the pathway pyrimidine metabolism; UMP biosynthesis via salvage pathway; uracil from uridine (phosphorylase route): step 1/1. In terms of biological role, the enzymes which catalyze the reversible phosphorolysis of pyrimidine nucleosides are involved in the degradation of these compounds and in their utilization as carbon and energy sources, or in the rescue of pyrimidine bases for nucleotide synthesis. The sequence is that of Uridine phosphorylase (udp) from Lacticaseibacillus rhamnosus (Lactobacillus rhamnosus).